We begin with the raw amino-acid sequence, 123 residues long: Peptide methionine sulfoxide reductase MsrA (123 aa).

Cys8 is an active-site residue.

The protein belongs to the MsrA Met sulfoxide reductase family.

The catalysed reaction is L-methionyl-[protein] + [thioredoxin]-disulfide + H2O = L-methionyl-(S)-S-oxide-[protein] + [thioredoxin]-dithiol. The enzyme catalyses [thioredoxin]-disulfide + L-methionine + H2O = L-methionine (S)-S-oxide + [thioredoxin]-dithiol. Functionally, has an important function as a repair enzyme for proteins that have been inactivated by oxidation. Catalyzes the reversible oxidation-reduction of methionine sulfoxide in proteins to methionine. This is Peptide methionine sulfoxide reductase MsrA from Thermoactinomyces vulgaris.